Consider the following 274-residue polypeptide: Dermonecrotic toxin SaSicTox-betaIIB1 (274 aa).

H5 is an active-site residue. The Mg(2+) site is built by E25 and D27. H41 acts as the Nucleophile in catalysis. 2 cysteine pairs are disulfide-bonded: C45–C51 and C47–C190. Residue D85 participates in Mg(2+) binding.

The protein belongs to the arthropod phospholipase D family. Class II subfamily. Mg(2+) is required as a cofactor. As to expression, expressed by the venom gland.

Its subcellular location is the secreted. The enzyme catalyses an N-(acyl)-sphingosylphosphocholine = an N-(acyl)-sphingosyl-1,3-cyclic phosphate + choline. The catalysed reaction is an N-(acyl)-sphingosylphosphoethanolamine = an N-(acyl)-sphingosyl-1,3-cyclic phosphate + ethanolamine. It catalyses the reaction a 1-acyl-sn-glycero-3-phosphocholine = a 1-acyl-sn-glycero-2,3-cyclic phosphate + choline. It carries out the reaction a 1-acyl-sn-glycero-3-phosphoethanolamine = a 1-acyl-sn-glycero-2,3-cyclic phosphate + ethanolamine. Its function is as follows. Dermonecrotic toxins cleave the phosphodiester linkage between the phosphate and headgroup of certain phospholipids (sphingolipid and lysolipid substrates), forming an alcohol (often choline) and a cyclic phosphate. This toxin acts on sphingomyelin (SM). It may also act on ceramide phosphoethanolamine (CPE), lysophosphatidylcholine (LPC) and lysophosphatidylethanolamine (LPE), but not on lysophosphatidylserine (LPS), and lysophosphatidylglycerol (LPG). It acts by transphosphatidylation, releasing exclusively cyclic phosphate products as second products. Induces dermonecrosis, hemolysis, increased vascular permeability, edema, inflammatory response, and platelet aggregation. The chain is Dermonecrotic toxin SaSicTox-betaIIB1 from Sicarius albospinosus (Six-eyed crab spider).